We begin with the raw amino-acid sequence, 235 residues long: Protein C1orf43 homolog (235 aa).

Residues 11 to 31 form a helical membrane-spanning segment; it reads VNVVLVMAYGSLVFVLLFIFV.

It localises to the membrane. The protein resides in the golgi apparatus. The protein localises to the mitochondrion. Functionally, general regulator of phagocytosis. Required to uptake Gram negative bacterium by macrophages. The chain is Protein C1orf43 homolog from Rattus norvegicus (Rat).